Here is a 156-residue protein sequence, read N- to C-terminus: Myosin regulatory light chain B, smooth adductor muscle (156 aa).

At Ala-1 the chain carries Blocked amino end (Ala). EF-hand domains lie at Lys-15–Thr-50 and Asp-84–Asn-119. Residues Asp-28, Asn-30, Asp-32, and Asp-39 each coordinate Ca(2+).

In molluscan muscle, calcium regulation is associated with myosin rather than with actin. Muscle myosin contains two types of light chains: the catalytic light chain, essential for ATPase activity, and the regulatory light chain, a calcium-binding protein responsible for Ca(2+) dependent binding and Ca(2+) dependent Mg-ATPase activity. The chain is Myosin regulatory light chain B, smooth adductor muscle from Mizuhopecten yessoensis (Japanese scallop).